A 338-amino-acid polypeptide reads, in one-letter code: tRNA N6-adenosine threonylcarbamoyltransferase (338 aa).

The Fe cation site is built by histidine 111 and histidine 115. Residues 134–138 (LVSGG), aspartate 167, glycine 180, and asparagine 272 contribute to the substrate site. A Fe cation-binding site is contributed by aspartate 300.

The protein belongs to the KAE1 / TsaD family. The cofactor is Fe(2+).

It localises to the cytoplasm. It catalyses the reaction L-threonylcarbamoyladenylate + adenosine(37) in tRNA = N(6)-L-threonylcarbamoyladenosine(37) in tRNA + AMP + H(+). In terms of biological role, required for the formation of a threonylcarbamoyl group on adenosine at position 37 (t(6)A37) in tRNAs that read codons beginning with adenine. Is involved in the transfer of the threonylcarbamoyl moiety of threonylcarbamoyl-AMP (TC-AMP) to the N6 group of A37, together with TsaE and TsaB. TsaD likely plays a direct catalytic role in this reaction. This is tRNA N6-adenosine threonylcarbamoyltransferase from Vibrio atlanticus (strain LGP32) (Vibrio splendidus (strain Mel32)).